A 101-amino-acid chain; its full sequence is Urease subunit beta (101 aa).

The protein belongs to the urease beta subunit family. As to quaternary structure, heterotrimer of UreA (gamma), UreB (beta) and UreC (alpha) subunits. Three heterotrimers associate to form the active enzyme.

The protein resides in the cytoplasm. It catalyses the reaction urea + 2 H2O + H(+) = hydrogencarbonate + 2 NH4(+). The protein operates within nitrogen metabolism; urea degradation; CO(2) and NH(3) from urea (urease route): step 1/1. This is Urease subunit beta from Azotobacter vinelandii (strain DJ / ATCC BAA-1303).